We begin with the raw amino-acid sequence, 566 residues long: Heat shock protein 70 homolog C57A7.12 (566 aa).

Position 39–46 (39–46 (AFNRDGKT)) interacts with ATP. Residues Ser-86 and Ser-500 each carry the phosphoserine modification.

Belongs to the heat shock protein 70 family.

The polypeptide is Heat shock protein 70 homolog C57A7.12 (Schizosaccharomyces pombe (strain 972 / ATCC 24843) (Fission yeast)).